Consider the following 95-residue polypeptide: Small ribosomal subunit protein uS17 (95 aa).

The protein belongs to the universal ribosomal protein uS17 family. Part of the 30S ribosomal subunit.

In terms of biological role, one of the primary rRNA binding proteins, it binds specifically to the 5'-end of 16S ribosomal RNA. The chain is Small ribosomal subunit protein uS17 from Synechococcus sp. (strain CC9902).